The chain runs to 364 residues: Methylthioribose-1-phosphate isomerase (364 aa).

The Proton donor role is filled by aspartate 254.

The protein belongs to the eIF-2B alpha/beta/delta subunits family. MtnA subfamily.

The protein localises to the cytoplasm. It localises to the nucleus. The catalysed reaction is 5-(methylsulfanyl)-alpha-D-ribose 1-phosphate = 5-(methylsulfanyl)-D-ribulose 1-phosphate. The protein operates within amino-acid biosynthesis; L-methionine biosynthesis via salvage pathway; L-methionine from S-methyl-5-thio-alpha-D-ribose 1-phosphate: step 1/6. Its function is as follows. Catalyzes the interconversion of methylthioribose-1-phosphate (MTR-1-P) into methylthioribulose-1-phosphate (MTRu-1-P). This Drosophila ananassae (Fruit fly) protein is Methylthioribose-1-phosphate isomerase.